Consider the following 106-residue polypeptide: Acidic phospholipase A2 PhTX-III (106 aa).

Ca(2+)-binding residues include Y23, G25, and G27. 5 disulfides stabilise this stretch: C24/C40, C39/C75, C45/C106, C46/C68, and C55/C66. Residue H43 is part of the active site. D44 contacts Ca(2+). D69 is an active-site residue.

Requires Ca(2+) as cofactor. In terms of tissue distribution, expressed by the venom gland.

It is found in the secreted. The catalysed reaction is a 1,2-diacyl-sn-glycero-3-phosphocholine + H2O = a 1-acyl-sn-glycero-3-phosphocholine + a fatty acid + H(+). With respect to regulation, partially inhibited by magnesium ions and completely inhibited by zinc ions These divalent cations may act as competitive antagonists of the cofactor. Its function is as follows. Snake venom phospholipase A2 (PLA2) that induces inflammatory response, with local edema and release of cytokines IL-1 alpha, IL-6 and TNF-alpha. Does not exhibit myotoxic, anticoagulant and antibacterial effects. Release of pro-inflammatory cytokines may be due to mast cell degranulation, and edema may be induced by arachidonic acid that results from the PLA2 catalytic activity. PLA2 catalyzes the calcium-dependent hydrolysis of the 2-acyl groups in 3-sn-phosphoglycerides. The chain is Acidic phospholipase A2 PhTX-III from Bothrocophias hyoprora (Amazonian hognose viper).